Reading from the N-terminus, the 130-residue chain is MSGRGKQGGKARAKAKTRSSRAGLQFPVGRVHRLLRKGNYSERVGAGAPVYLAAVLEYLTAEILELAGNAARDNKKTRIIPRHLQLAIRNDEELNKLLGRVTIAQGGVLPNIQAVLLPKKTESHHKAKGK.

A disordered region spans residues 1 to 22 (MSGRGKQGGKARAKAKTRSSRA). Residue S2 is modified to N-acetylserine. S2 bears the Phosphoserine; by RPS6KA5 mark. R4 carries the post-translational modification Citrulline; alternate. Residue R4 is modified to Symmetric dimethylarginine; by PRMT5; alternate. Residues K6 and K10 each carry the N6-(2-hydroxyisobutyryl)lysine; alternate modification. N6-acetyllysine; alternate is present on K6. Basic residues predominate over residues 7-19 (QGGKARAKAKTRS). N6-(beta-hydroxybutyryl)lysine; alternate occurs at positions 10 and 14. K10 is subject to N6-lactoyllysine; alternate. At K10 the chain carries N6-succinyllysine; alternate. K14 participates in a covalent cross-link: Glycyl lysine isopeptide (Lys-Gly) (interchain with G-Cter in ubiquitin); alternate. K16 is covalently cross-linked (Glycyl lysine isopeptide (Lys-Gly) (interchain with G-Cter in ubiquitin)). K37 carries the post-translational modification N6-(2-hydroxyisobutyryl)lysine; alternate. K37 carries the N6-(beta-hydroxybutyryl)lysine; alternate modification. An N6-crotonyllysine; alternate modification is found at K37. N6-(2-hydroxyisobutyryl)lysine is present on residues K75 and K76. Position 96 is an N6-(2-hydroxyisobutyryl)lysine; alternate (K96). K96 is subject to N6-(beta-hydroxybutyryl)lysine; alternate. Residue K96 is modified to N6-succinyllysine; alternate. The residue at position 96 (K96) is an N6-glutaryllysine; alternate. Q105 bears the N5-methylglutamine mark. K119 carries the post-translational modification N6-(2-hydroxyisobutyryl)lysine; alternate. An N6-(beta-hydroxybutyryl)lysine; alternate modification is found at K119. N6-crotonyllysine; alternate occurs at positions 119 and 120. N6-glutaryllysine; alternate is present on residues K119 and K120. K120 participates in a covalent cross-link: Glycyl lysine isopeptide (Lys-Gly) (interchain with G-Cter in ubiquitin); alternate. T121 is modified (phosphothreonine; by DCAF1). N6-crotonyllysine; alternate is present on K126. At K126 the chain carries N6-glutaryllysine; alternate.

The protein belongs to the histone H2A family. As to quaternary structure, the nucleosome is a histone octamer containing two molecules each of H2A, H2B, H3 and H4 assembled in one H3-H4 heterotetramer and two H2A-H2B heterodimers. The octamer wraps approximately 147 bp of DNA. In terms of processing, deiminated on Arg-4 in granulocytes upon calcium entry. Post-translationally, monoubiquitination of Lys-120 (H2AK119Ub) by RING1, TRIM37 and RNF2/RING2 complex gives a specific tag for epigenetic transcriptional repression and participates in X chromosome inactivation of female mammals. It is involved in the initiation of both imprinted and random X inactivation. Ubiquitinated H2A is enriched in inactive X chromosome chromatin. Ubiquitination of H2A functions downstream of methylation of 'Lys-27' of histone H3 (H3K27me). H2AK119Ub by RNF2/RING2 can also be induced by ultraviolet and may be involved in DNA repair. Monoubiquitination of Lys-120 (H2AK119Ub) by TRIM37 may promote transformation of cells in a number of breast cancers. Following DNA double-strand breaks (DSBs), it is ubiquitinated through 'Lys-63' linkage of ubiquitin moieties by the E2 ligase UBE2N and the E3 ligases RNF8 and RNF168, leading to the recruitment of repair proteins to sites of DNA damage. Ubiquitination at Lys-14 and Lys-16 (H2AK13Ub and H2AK15Ub, respectively) in response to DNA damage is initiated by RNF168 that mediates monoubiquitination at these 2 sites, and 'Lys-63'-linked ubiquitin are then conjugated to monoubiquitin; RNF8 is able to extend 'Lys-63'-linked ubiquitin chains in vitro. Deubiquitinated by USP51 at Lys-14 and Lys-16 (H2AK13Ub and H2AK15Ub, respectively) after damaged DNA is repaired. H2AK119Ub and ionizing radiation-induced 'Lys-63'-linked ubiquitination (H2AK13Ub and H2AK15Ub) are distinct events. Phosphorylation on Ser-2 (H2AS1ph) is enhanced during mitosis. Phosphorylation on Ser-2 by RPS6KA5/MSK1 directly represses transcription. Acetylation of H3 inhibits Ser-2 phosphorylation by RPS6KA5/MSK1. Phosphorylation at Thr-121 (H2AT120ph) by DCAF1 is present in the regulatory region of many tumor suppresor genes and down-regulates their transcription. In terms of processing, glutamine methylation at Gln-105 (H2AQ104me) by FBL is specifically dedicated to polymerase I. It is present at 35S ribosomal DNA locus and impairs binding of the FACT complex. Post-translationally, symmetric dimethylation on Arg-4 by the PRDM1/PRMT5 complex may play a crucial role in the germ-cell lineage. Crotonylation (Kcr) is specifically present in male germ cells and marks testis-specific genes in post-meiotic cells, including X-linked genes that escape sex chromosome inactivation in haploid cells. Crotonylation marks active promoters and enhancers and confers resistance to transcriptional repressors. It is also associated with post-meiotically activated genes on autosomes. In terms of processing, lactylated in macrophages by EP300/P300 by using lactoyl-CoA directly derived from endogenous or exogenous lactate, leading to stimulates gene transcription.

Its subcellular location is the nucleus. It localises to the chromosome. Functionally, core component of nucleosome. Nucleosomes wrap and compact DNA into chromatin, limiting DNA accessibility to the cellular machineries which require DNA as a template. Histones thereby play a central role in transcription regulation, DNA repair, DNA replication and chromosomal stability. DNA accessibility is regulated via a complex set of post-translational modifications of histones, also called histone code, and nucleosome remodeling. The protein is Histone H2A type 1-B/E of Homo sapiens (Human).